We begin with the raw amino-acid sequence, 619 residues long: Zinc finger and BTB domain-containing protein 7C (619 aa).

The BTB domain maps to 34–101 (CDVLLVVQEQ…AYTSTLTITA (68 aa)). Positions 129-218 (PGGDGGEEDD…DSFQAGSPGH (90 aa)) are disordered. Positions 133–173 (GGEEDDKEDDDDDEDDDDEEDEEEEEEEEEDDDDDTEDFAD) are enriched in acidic residues. Residues 191–208 (KTDHLTEKAYSDTPRDFP) are compositionally biased toward basic and acidic residues. 3 C2H2-type zinc fingers span residues 364 to 386 (QQCPICHKVIMGAGKLPRHMRTH), 392 to 414 (YMCTICEVRFTRQDKLKIHMRKH), and 420 to 442 (YLCIHCNAKFVHNYDLKNHMRIH). The segment at 448–478 (YQCEFCYKSFTRSDHLHRHIKRQSCRMARPR) adopts a C2H2-type 4; degenerate zinc-finger fold.

Detected in normal cervical keratinocytes, and in some cervical carcinoma cell lines.

May be a tumor suppressor gene. In Homo sapiens (Human), this protein is Zinc finger and BTB domain-containing protein 7C (ZBTB7C).